The chain runs to 117 residues: Glycine cleavage system H-like protein (117 aa).

One can recognise a Lipoyl-binding domain in the interval 21–103; that stretch reads IVKLGLSSQM…ESEGWFVVLQ (83 aa). Lys-62 is modified (N6-lipoyllysine).

It belongs to the GcvH family. Requires (R)-lipoate as cofactor.

In Chlamydia trachomatis serovar D (strain ATCC VR-885 / DSM 19411 / UW-3/Cx), this protein is Glycine cleavage system H-like protein.